A 152-amino-acid polypeptide reads, in one-letter code: Large ribosomal subunit protein uL13 (152 aa).

Positions 130–152 (HPHEAQSPEVLDLASKNPKNTRS) are disordered.

Belongs to the universal ribosomal protein uL13 family. As to quaternary structure, part of the 50S ribosomal subunit.

In terms of biological role, this protein is one of the early assembly proteins of the 50S ribosomal subunit, although it is not seen to bind rRNA by itself. It is important during the early stages of 50S assembly. The chain is Large ribosomal subunit protein uL13 from Dinoroseobacter shibae (strain DSM 16493 / NCIMB 14021 / DFL 12).